Reading from the N-terminus, the 445-residue chain is Sterile alpha motif domain-containing protein 7 (445 aa).

Positions 98 to 172 are required for localization to nuclear polycomb bodies; that stretch reads HAARAEMEMY…HLQGNPILLA (75 aa). Residues 193–282 are disordered; it reads YQKPPESDTE…WDDGKGKPSE (90 aa). The span at 227-244 shows a compositional bias: basic and acidic residues; it reads IKDPDIEVDNQQKPRVAD. In terms of domain architecture, SAM spans 324–378; it reads WTVDDVYNFIRSLPGCSDYAQVFKDHAIDGETLPLLTEQHLRGTMGLKLGPALKI. Residues 425 to 445 form a disordered region; that stretch reads SIPGPQDLLSPKRTEQDVMRN. A compositionally biased stretch (basic and acidic residues) spans 434 to 445; it reads SPKRTEQDVMRN.

As to quaternary structure, monomer, homodimer and homooligomer. Component of a Polycomb group (PcG) multiprotein PRC1-like complex. Interacts with PHC2 and NR2E3. Interacts with RNF1 in a PHC2-dependent manner. Interacts with SAMD11. Expressed in the retina and the pineal gland. In the retina, it is predominantly expressed in the outer nuclear layer and developing rod photoreceptors.

The protein localises to the nucleus. The protein resides in the cytoplasm. In terms of biological role, component of a Polycomb group (PcG) multiprotein PRC1-like complex, essential for establishing rod photoreceptor cell identity and function by silencing nonrod gene expression in developing rod photoreceptor cells. Via its association with the PRC1-like complex, promotes epigenetic repressive marks H3K27me3 and H2AK119ub marks in nonrod genes, silencing their transcription. Represses Crx-controlled photoreceptor-specific gene expression. This chain is Sterile alpha motif domain-containing protein 7 (Samd7), found in Mus musculus (Mouse).